The chain runs to 400 residues: Subtilisin-like protease CPC735_013700 (400 aa).

The first 19 residues, 1–19, serve as a signal peptide directing secretion; it reads MGFVKILSLSLAATAVADA. Positions 20-116 are excised as a propeptide; sequence ATILSPRYPN…IEPNQIVTIS (97 aa). Residues 36 to 115 form the Inhibitor I9 domain; it reads YIVVMKDGVS…FIEPNQIVTI (80 aa). In terms of domain architecture, Peptidase S8 spans 126 to 400; it reads SWGLPRISVK…RKLLYNNSGK (275 aa). Active-site charge relay system residues include D161 and H192. N252 carries N-linked (GlcNAc...) asparagine glycosylation. The active-site Charge relay system is the S346. N396 carries N-linked (GlcNAc...) asparagine glycosylation.

This sequence belongs to the peptidase S8 family.

It localises to the secreted. In terms of biological role, secreted subtilisin-like serine protease with keratinolytic activity that contributes to pathogenicity. This Coccidioides posadasii (strain C735) (Valley fever fungus) protein is Subtilisin-like protease CPC735_013700.